The primary structure comprises 327 residues: 4-diphosphocytidyl-2-C-methyl-D-erythritol kinase (327 aa).

Residue lysine 14 is part of the active site. Proline 97–alanine 107 is a binding site for ATP. Aspartate 140 is a catalytic residue.

Belongs to the GHMP kinase family. IspE subfamily.

The catalysed reaction is 4-CDP-2-C-methyl-D-erythritol + ATP = 4-CDP-2-C-methyl-D-erythritol 2-phosphate + ADP + H(+). Its pathway is isoprenoid biosynthesis; isopentenyl diphosphate biosynthesis via DXP pathway; isopentenyl diphosphate from 1-deoxy-D-xylulose 5-phosphate: step 3/6. Its function is as follows. Catalyzes the phosphorylation of the position 2 hydroxy group of 4-diphosphocytidyl-2C-methyl-D-erythritol. In Oleidesulfovibrio alaskensis (strain ATCC BAA-1058 / DSM 17464 / G20) (Desulfovibrio alaskensis), this protein is 4-diphosphocytidyl-2-C-methyl-D-erythritol kinase.